The primary structure comprises 240 residues: Ribosomal RNA small subunit methyltransferase G (240 aa).

S-adenosyl-L-methionine is bound by residues Gly79, Phe84, 130 to 131 (AE), and Arg149.

This sequence belongs to the methyltransferase superfamily. RNA methyltransferase RsmG family.

The protein resides in the cytoplasm. Specifically methylates the N7 position of a guanine in 16S rRNA. The protein is Ribosomal RNA small subunit methyltransferase G of Lactobacillus helveticus (strain DPC 4571).